The primary structure comprises 169 residues: Ribosome maturation factor RimM (169 aa).

The PRC barrel domain maps to 97–169; the sequence is NDEAYFTDLI…KIVVDWEYDY (73 aa).

The protein belongs to the RimM family. In terms of assembly, binds ribosomal protein uS19.

Its subcellular location is the cytoplasm. Its function is as follows. An accessory protein needed during the final step in the assembly of 30S ribosomal subunit, possibly for assembly of the head region. Essential for efficient processing of 16S rRNA. May be needed both before and after RbfA during the maturation of 16S rRNA. It has affinity for free ribosomal 30S subunits but not for 70S ribosomes. The chain is Ribosome maturation factor RimM from Francisella philomiragia subsp. philomiragia (strain ATCC 25017 / CCUG 19701 / FSC 153 / O#319-036).